We begin with the raw amino-acid sequence, 322 residues long: 3-hydroxyacyl-CoA dehydrogenase FVEG_12628 (322 aa).

The chain crosses the membrane as a helical span at residues 5-25 (IRTVAIVGCGVIGMGWAVLFL). E151 functions as the For hydroxyacyl-coenzyme A dehydrogenase activity in the catalytic mechanism.

It belongs to the 3-hydroxyacyl-CoA dehydrogenase family.

It is found in the membrane. Its function is as follows. 3-hydroxyacyl-CoA dehydrogenase; part of the Fusarium detoxification of benzoxazolinone cluster 2 (FDB2) involved in the degradation of benzoxazolinones produced by the host plant. Maize, wheat, and rye produce the 2 benzoxazinone phytoanticipins 2,4-dihy-droxy-7-methoxy-1,4-benzoxazin-3-one (DIMBOA) and 2,4-dihydroxy-1,4-benzoxazin-3-one (DIBOA) that, due to their inherent instability once released, spontaneously degrade to the more stable corresponding benzoxazolinones, 6-methoxy-2-benzoxazolinone (MBOA) and 2-benzoxazolinone (BOA), respectively. The first step in the detoxification of benzoxazolinones involves the hydrolysis of the cyclic ester bond of benzoxazolinones by the FDB1 cluster gamma-lactamase MBL1 to aminophenols. MBL1 is able to convert BOA into 2-aminophenol (2-AP), as well as MBOA into 5-methoxy-2-aminophenol (2-AMP). The FDB2 cluster N-malonyltransferase FDB2/NAT1 then metabolizes aminophenols via N-malonylation to non-toxic malonamic acids. FDB2/NAT1 converts 2-AP into N-(2-hydroxyphenyl) malonamic acid (HPMA) and 2-AMP into N-(2-hydroxy-4-methoxyphenyl) malonamic acid (HMPMA). The duplicated dienlactone hydrolases DLH1 and DLH2 may provide redundant function for hydrolyzing the lactone moiety in the BOA molecule. The roles of the amidases an other enzymes encoded by the 2 FDB clusters have not been identified so far. This is 3-hydroxyacyl-CoA dehydrogenase FVEG_12628 from Gibberella moniliformis (strain M3125 / FGSC 7600) (Maize ear and stalk rot fungus).